A 461-amino-acid polypeptide reads, in one-letter code: Mycosin-3 (461 aa).

Residues 1-25 form the signal peptide; sequence MIRAAFACLAATVVVAGWWTPPAWA. The 334-residue stretch at 64–397 folds into the Peptidase S8 domain; sequence DPGVPTPSQT…AGNLDAVAAL (334 aa). Catalysis depends on charge relay system residues Asp95, His126, and Ser342. A helical transmembrane segment spans residues 432–452; it reads AFAGAAALSVLVGLTAATVAI.

This sequence belongs to the peptidase S8 family.

It is found in the cell membrane. This chain is Mycosin-3, found in Mycobacterium tuberculosis (strain ATCC 25618 / H37Rv).